An 813-amino-acid polypeptide reads, in one-letter code: Ankyrin repeat domain-containing protein SOWAHB (813 aa).

Disordered regions lie at residues 142–256 and 400–436; these read SAAP…QSLS and ETCG…DSHK. Over residues 158-176 the composition is skewed to basic and acidic residues; sequence MSEKARVNPSHWDTKRYYP. Positions 177–189 are enriched in pro residues; sequence EDPPVPDSLPVSP. Residues 191–202 are compositionally biased toward polar residues; that stretch reads CTNTRQSSFTST. The span at 208–244 shows a compositional bias: low complexity; the sequence is HSLSSNNLSSSFSSPESPGLVAKPYNASPSPAGSSPN. The segment covering 245–256 has biased composition (polar residues); sequence IREQTPKSQSLS. The segment covering 400-416 has biased composition (acidic residues); it reads ETCGSEESDSGEGGDCD. ANK repeat units follow at residues 657–686 and 696–726; these read TGYT…KAGI and NGYT…NVKV.

It belongs to the SOWAH family.

The chain is Ankyrin repeat domain-containing protein SOWAHB (sowahb) from Xenopus laevis (African clawed frog).